The primary structure comprises 319 residues: Beta-ketoacyl-[acyl-carrier-protein] synthase III (319 aa).

Catalysis depends on residues Cys113 and His246. An ACP-binding region spans residues 247–251; that stretch reads QANIR. Asn276 is a catalytic residue.

It belongs to the thiolase-like superfamily. FabH family. Homodimer.

It is found in the cytoplasm. The enzyme catalyses malonyl-[ACP] + acetyl-CoA + H(+) = 3-oxobutanoyl-[ACP] + CO2 + CoA. Its pathway is lipid metabolism; fatty acid biosynthesis. Functionally, catalyzes the condensation reaction of fatty acid synthesis by the addition to an acyl acceptor of two carbons from malonyl-ACP. Catalyzes the first condensation reaction which initiates fatty acid synthesis and may therefore play a role in governing the total rate of fatty acid production. Possesses both acetoacetyl-ACP synthase and acetyl transacylase activities. Its substrate specificity determines the biosynthesis of branched-chain and/or straight-chain of fatty acids. The protein is Beta-ketoacyl-[acyl-carrier-protein] synthase III of Ehrlichia ruminantium (strain Welgevonden).